A 162-amino-acid chain; its full sequence is MRIAVYPGSFDPITNGHLDIIERAAELFDRLIVAIAKNPMKKPLFTLEERLDMLRETLKYYPNIEIDSFEGLTVNYLKAKNAQVIIRGLRAISDFENEFMMALTNKKLVPWVETIFLMTKAEYSFISSSAVKEVAMYGGCLKGLVPEYVELKLREKFQKEGC.

S9 serves as a coordination point for substrate. ATP is bound by residues 9 to 10 (SF) and H17. The substrate site is built by K41, T73, and R87. ATP is bound by residues 88-90 (GLR), E98, and 123-129 (YSFISSS).

It belongs to the bacterial CoaD family. As to quaternary structure, homohexamer. Requires Mg(2+) as cofactor.

Its subcellular location is the cytoplasm. It catalyses the reaction (R)-4'-phosphopantetheine + ATP + H(+) = 3'-dephospho-CoA + diphosphate. The protein operates within cofactor biosynthesis; coenzyme A biosynthesis; CoA from (R)-pantothenate: step 4/5. Its function is as follows. Reversibly transfers an adenylyl group from ATP to 4'-phosphopantetheine, yielding dephospho-CoA (dPCoA) and pyrophosphate. In Carboxydothermus hydrogenoformans (strain ATCC BAA-161 / DSM 6008 / Z-2901), this protein is Phosphopantetheine adenylyltransferase.